The sequence spans 271 residues: ATP synthase subunit a (271 aa).

Transmembrane regions (helical) follow at residues Phe-38–Val-58, Leu-100–Leu-120, Asp-146–Ile-166, Leu-220–Pro-240, and Ala-242–Val-262.

Belongs to the ATPase A chain family. F-type ATPases have 2 components, CF(1) - the catalytic core - and CF(0) - the membrane proton channel. CF(1) has five subunits: alpha(3), beta(3), gamma(1), delta(1), epsilon(1). CF(0) has three main subunits: a(1), b(2) and c(9-12). The alpha and beta chains form an alternating ring which encloses part of the gamma chain. CF(1) is attached to CF(0) by a central stalk formed by the gamma and epsilon chains, while a peripheral stalk is formed by the delta and b chains.

The protein resides in the cell inner membrane. Key component of the proton channel; it plays a direct role in the translocation of protons across the membrane. The protein is ATP synthase subunit a of Salmonella choleraesuis (strain SC-B67).